The following is a 209-amino-acid chain: Large ribosomal subunit protein uL3 (209 aa).

Gln-150 carries the N5-methylglutamine modification.

Belongs to the universal ribosomal protein uL3 family. In terms of assembly, part of the 50S ribosomal subunit. Forms a cluster with proteins L14 and L19. Post-translationally, methylated by PrmB.

One of the primary rRNA binding proteins, it binds directly near the 3'-end of the 23S rRNA, where it nucleates assembly of the 50S subunit. The chain is Large ribosomal subunit protein uL3 from Citrobacter koseri (strain ATCC BAA-895 / CDC 4225-83 / SGSC4696).